The primary structure comprises 432 residues: Myb family transcription factor EFM (432 aa).

A coiled-coil region spans residues 36-81; sequence LEDLLSRLEQERLKIDAFKRELPLCMQLLNNAVEVYKQQLEAYRAN. Composition is skewed to polar residues over residues 123–139 and 187–197; these read SQSE…TDQS and SPTNEHTNGQD. Positions 123-237 are disordered; sequence SQSETKPKNI…SQSNRKARRC (115 aa). Low complexity predominate over residues 201–231; that stretch reads ESMINNDNNYNNNNNNNSNSNGVSSTTSQSN. The HTH myb-type domain maps to 230–290; that stretch reads SNRKARRCWS…HLQKYRLHTR (61 aa). A DNA-binding region (H-T-H motif) is located at residues 261 to 286; the sequence is PKQIRELMKVDGLTNDEVKSHLQKYR. The tract at residues 354–412 is disordered; the sequence is FYTTPPPPQPLHHHHFQTFNGSSGGTASTDSTHHQVTDSPTVEGKSPESGGGERKGLAA.

As to quaternary structure, interacts with JMJ30, but not with SVP, FLC or CO. As to expression, specifically expressed in vascular tissues of cotyledons, rosette leaves and cauline leaves. Not detected in the vegetative shoot apical meristem.

It is found in the nucleus. Transcription factor acting as a flowering repressor, directly repressing FT expression in a dosage-dependent manner in the leaf vasculature. In Arabidopsis thaliana (Mouse-ear cress), this protein is Myb family transcription factor EFM.